The following is a 667-amino-acid chain: Primary amine oxidase (667 aa).

An N-terminal signal peptide occupies residues 1–18; it reads KFALFSVLTLLSFHAVFS. N149 is a glycosylation site (N-linked (GlcNAc...) asparagine). C155 and C176 form a disulfide bridge. Residues 216–246 form a disordered region; it reads PTAENTEYQVSKQSPPFGPKQHSLTSHQPQG. The segment covering 218 to 229 has biased composition (polar residues); it reads AENTEYQVSKQS. Residue N252 is glycosylated (N-linked (GlcNAc...) asparagine). Substrate is bound at residue 316 to 327; it reads FFDSGEFGFGLS. D318 (proton acceptor) is an active-site residue. A disulfide bond links C337 and C363. N382 carries N-linked (GlcNAc...) asparagine glycosylation. 402–407 serves as a coordination point for substrate; the sequence is VGNYDN. The active-site Schiff-base intermediate with substrate; via topaquinone is the Y405. Residue Y405 is modified to 2',4',5'-topaquinone. Residues H460 and H462 each coordinate Cu cation. D469, F470, and D471 together coordinate Mn(2+). N-linked (GlcNAc...) asparagine glycosylation is present at N576. Positions 610 and 611 each coordinate Mn(2+). H621 provides a ligand contact to Cu cation.

The protein belongs to the copper/topaquinone oxidase family. As to quaternary structure, homodimer. The cofactor is Cu cation. Zn(2+) is required as a cofactor. Requires L-topaquinone as cofactor. Mn(2+) serves as cofactor. Post-translationally, glycosylated; contains two carbohydrate chains per monomer. Topaquinone (TPQ) is generated by copper-dependent autoxidation of a specific tyrosyl residue.

It carries out the reaction a primary methyl amine + O2 + H2O = an aldehyde + H2O2 + NH4(+). This Lens culinaris (Lentil) protein is Primary amine oxidase.